Reading from the N-terminus, the 259-residue chain is Thiazole synthase (259 aa).

Catalysis depends on Lys-95, which acts as the Schiff-base intermediate with DXP. 1-deoxy-D-xylulose 5-phosphate is bound by residues Gly-156, 182–183 (AG), and 204–205 (NT).

It belongs to the ThiG family. In terms of assembly, homotetramer. Forms heterodimers with either ThiH or ThiS.

It localises to the cytoplasm. The enzyme catalyses [ThiS sulfur-carrier protein]-C-terminal-Gly-aminoethanethioate + 2-iminoacetate + 1-deoxy-D-xylulose 5-phosphate = [ThiS sulfur-carrier protein]-C-terminal Gly-Gly + 2-[(2R,5Z)-2-carboxy-4-methylthiazol-5(2H)-ylidene]ethyl phosphate + 2 H2O + H(+). It functions in the pathway cofactor biosynthesis; thiamine diphosphate biosynthesis. In terms of biological role, catalyzes the rearrangement of 1-deoxy-D-xylulose 5-phosphate (DXP) to produce the thiazole phosphate moiety of thiamine. Sulfur is provided by the thiocarboxylate moiety of the carrier protein ThiS. In vitro, sulfur can be provided by H(2)S. This chain is Thiazole synthase, found in Serratia proteamaculans (strain 568).